Reading from the N-terminus, the 294-residue chain is Polyketide transferase grgF (294 aa).

Active-site residues include Cys-115, Asp-240, and His-269.

It belongs to the polyketide transferase af380 family. As to quaternary structure, homodimer.

Its pathway is secondary metabolite biosynthesis. Polyketide transferase; part of the gene cluster that mediates the biosynthesis of gregatin A, a fungal polyketide featuring an alkylated furanone core. The PKS grgA synthesizes C11 and C4 polyketide chains in the presence and absence of the trans-enoyl reductase grgB, respectively. The polyketide transferase grgF is then responsible for the fusion of the two carbon chains to produce the furanone skeleton of gregatin A. GrgF first undergoes a conformational change to an open form, and the active site Cys-115 is acylated by the C11 chain. After the elimination of the phosphopantetheinyl chain, the second polyketide chain of four carbons long is delivered adjacent to the enzyme-bound C11 chain. The catalytic histidine, His-269, deprotonates a proton from C-2 of the long chain, and the resultant carbanion attacks the C-1 carbonyl of the crotonyl group to perform Claisen condensation, by which the phosphopantetheinyl chain is released. Eventually, hydrolysis of the thioester linkage probably by a His-269-activated water molecule completes the reaction to afford the grgF final product. Next, the cytochrome P450 monooxygenase grgG accepts the unstable grgF final product as substrate and performs the oxidative cyclization to furnish the gregatin scaffold and leads to the formation of desmethylgregatin A. Finally, the O-methyltransferase grgD methylates the carboxyl group of desmethylgregatin A to provide gregatin A. This chain is Polyketide transferase grgF, found in Penicillium sp.